We begin with the raw amino-acid sequence, 261 residues long: Phosphoribosylaminoimidazole-succinocarboxamide synthase (261 aa).

This sequence belongs to the SAICAR synthetase family.

It catalyses the reaction 5-amino-1-(5-phospho-D-ribosyl)imidazole-4-carboxylate + L-aspartate + ATP = (2S)-2-[5-amino-1-(5-phospho-beta-D-ribosyl)imidazole-4-carboxamido]succinate + ADP + phosphate + 2 H(+). It participates in purine metabolism; IMP biosynthesis via de novo pathway; 5-amino-1-(5-phospho-D-ribosyl)imidazole-4-carboxamide from 5-amino-1-(5-phospho-D-ribosyl)imidazole-4-carboxylate: step 1/2. This Novosphingobium aromaticivorans (strain ATCC 700278 / DSM 12444 / CCUG 56034 / CIP 105152 / NBRC 16084 / F199) protein is Phosphoribosylaminoimidazole-succinocarboxamide synthase.